We begin with the raw amino-acid sequence, 241 residues long: Uracil-DNA glycosylase (241 aa).

Aspartate 71 serves as the catalytic Proton acceptor.

Belongs to the uracil-DNA glycosylase (UDG) superfamily. UNG family.

The protein localises to the cytoplasm. The enzyme catalyses Hydrolyzes single-stranded DNA or mismatched double-stranded DNA and polynucleotides, releasing free uracil.. Functionally, excises uracil residues from the DNA which can arise as a result of misincorporation of dUMP residues by DNA polymerase or due to deamination of cytosine. The polypeptide is Uracil-DNA glycosylase (Xanthomonas campestris pv. campestris (strain 8004)).